The chain runs to 204 residues: Ubiquitin-conjugating enzyme E2 T (204 aa).

Residues 2–152 form the UBC core domain; sequence QRASRLKKEL…AKQWTEAHAR (151 aa). C86 acts as the Glycyl thioester intermediate in catalysis. Glycyl lysine isopeptide (Lys-Gly) (interchain with G-Cter in ubiquitin) cross-links involve residues K91 and K181. A disordered region spans residues 150–204; sequence HARQKQKADEEELGTSSEVGDSEESHSTQKRKARPLGGMEKKFSPDVQRVYPGPS. Residues K190 and K191 each participate in a glycyl lysine isopeptide (Lys-Gly) (interchain with G-Cter in SUMO2) cross-link. Position 193 is a phosphoserine (S193).

It belongs to the ubiquitin-conjugating enzyme family. As to quaternary structure, interacts with FANCL and BRCA1. In terms of processing, auto-ubiquitinated. Effects of auto-monoubiquitination at Lys-91 and Lys-181 are unclear.

The protein resides in the nucleus. The enzyme catalyses S-ubiquitinyl-[E1 ubiquitin-activating enzyme]-L-cysteine + [E2 ubiquitin-conjugating enzyme]-L-cysteine = [E1 ubiquitin-activating enzyme]-L-cysteine + S-ubiquitinyl-[E2 ubiquitin-conjugating enzyme]-L-cysteine.. The protein operates within protein modification; protein ubiquitination. Its function is as follows. Accepts ubiquitin from the E1 complex and catalyzes its covalent attachment to other proteins. Catalyzes monoubiquitination. Involved in mitomycin-C (MMC)-induced DNA repair: acts as a specific E2 ubiquitin-conjugating enzyme for the Fanconi anemia complex by associating with E3 ubiquitin-protein ligase FANCL and catalyzing monoubiquitination of FANCD2, a key step in the DNA damage pathway. Also mediates monoubiquitination of FANCL and FANCI. May contribute to ubiquitination and degradation of BRCA1. In vitro able to promote polyubiquitination using all 7 ubiquitin Lys residues, but may prefer 'Lys-11'-, 'Lys-27'-, 'Lys-48'- and 'Lys-63'-linked polyubiquitination. The chain is Ubiquitin-conjugating enzyme E2 T (Ube2t) from Mus musculus (Mouse).